The sequence spans 189 residues: Potassium-transporting ATPase KdpC subunit (189 aa).

The helical transmembrane segment at 5–25 threads the bilayer; it reads LLPALTMLLVFTVITGIVYPL.

This sequence belongs to the KdpC family. As to quaternary structure, the system is composed of three essential subunits: KdpA, KdpB and KdpC.

Its subcellular location is the cell membrane. In terms of biological role, part of the high-affinity ATP-driven potassium transport (or Kdp) system, which catalyzes the hydrolysis of ATP coupled with the electrogenic transport of potassium into the cytoplasm. This subunit acts as a catalytic chaperone that increases the ATP-binding affinity of the ATP-hydrolyzing subunit KdpB by the formation of a transient KdpB/KdpC/ATP ternary complex. The sequence is that of Potassium-transporting ATPase KdpC subunit from Mycobacterium bovis (strain ATCC BAA-935 / AF2122/97).